The sequence spans 346 residues: Probable dual-specificity RNA methyltransferase RlmN (346 aa).

Glutamate 92 acts as the Proton acceptor in catalysis. The region spanning 98–332 is the Radical SAM core domain; the sequence is TDQRLTVCVS…VSLRASRGLD (235 aa). Residues cysteine 105 and cysteine 337 are joined by a disulfide bond. 3 residues coordinate [4Fe-4S] cluster: cysteine 112, cysteine 116, and cysteine 119. Residues 159-160, serine 189, 218-220, and asparagine 294 each bind S-adenosyl-L-methionine; these read GE and SLH. Cysteine 337 acts as the S-methylcysteine intermediate in catalysis.

This sequence belongs to the radical SAM superfamily. RlmN family. [4Fe-4S] cluster is required as a cofactor.

The protein resides in the cytoplasm. It catalyses the reaction adenosine(2503) in 23S rRNA + 2 reduced [2Fe-2S]-[ferredoxin] + 2 S-adenosyl-L-methionine = 2-methyladenosine(2503) in 23S rRNA + 5'-deoxyadenosine + L-methionine + 2 oxidized [2Fe-2S]-[ferredoxin] + S-adenosyl-L-homocysteine. The catalysed reaction is adenosine(37) in tRNA + 2 reduced [2Fe-2S]-[ferredoxin] + 2 S-adenosyl-L-methionine = 2-methyladenosine(37) in tRNA + 5'-deoxyadenosine + L-methionine + 2 oxidized [2Fe-2S]-[ferredoxin] + S-adenosyl-L-homocysteine. Its function is as follows. Specifically methylates position 2 of adenine 2503 in 23S rRNA and position 2 of adenine 37 in tRNAs. This Synechococcus sp. (strain CC9311) protein is Probable dual-specificity RNA methyltransferase RlmN.